A 482-amino-acid polypeptide reads, in one-letter code: Ribosomal RNA small subunit methyltransferase F (482 aa).

S-adenosyl-L-methionine is bound by residues 119–125 (ASAPGSK), Glu-143, Asp-170, and Asp-188. Cys-241 serves as the catalytic Nucleophile.

The protein belongs to the class I-like SAM-binding methyltransferase superfamily. RsmB/NOP family.

The protein resides in the cytoplasm. The enzyme catalyses cytidine(1407) in 16S rRNA + S-adenosyl-L-methionine = 5-methylcytidine(1407) in 16S rRNA + S-adenosyl-L-homocysteine + H(+). Its function is as follows. Specifically methylates the cytosine at position 1407 (m5C1407) of 16S rRNA. The polypeptide is Ribosomal RNA small subunit methyltransferase F (Shewanella sp. (strain ANA-3)).